The chain runs to 388 residues: FMRFamide neuropeptides (388 aa).

An N-terminal signal peptide occupies residues 1–21 (MVAPLLVFLFSLQLCHTTSWA). Positions 22–172 (YVGGNSLNSN…SNHQVIRDSR (151 aa)) are excised as a propeptide. The segment at 40 to 74 (FPAGTSNEVPEDAANGQDDNDDSQLTEPNDNNAPL) is disordered. The segment covering 64-74 (LTEPNDNNAPL) has biased composition (polar residues). Residues F179, F196, F208, F219, F230, F241, F253, F265, F277, F289, F301, F313, F325, F337, F346, F359, and F372 each carry the phenylalanine amide modification. Positions 360–388 (GRTPTQSSDFMRFGKSLDKSENKTSDLQK) are disordered. Over residues 374–388 (KSLDKSENKTSDLQK) the composition is skewed to basic and acidic residues. Positions 375–388 (SLDKSENKTSDLQK) are excised as a propeptide.

Belongs to the FARP (FMRFamide related peptide) family. As to expression, in the brain, expressed in 2 large cells in the lateral neurons in each optic lobe, 2 slightly bigger cells on both sides of the tritocerebrum, around 14 small cells in the dorsal area, around 13 cells in the subesophageal ganglion, and in the central brain.

It is found in the secreted. The chain is FMRFamide neuropeptides from Musca domestica (House fly).